The following is a 195-amino-acid chain: Protease (195 aa).

The Peptidase A2 domain occupies 71–149 (ALMLVDTGAE…DKWQILGRDV (79 aa)). Residue Asp76 is part of the active site.

This is Protease from Bos taurus (Bovine).